We begin with the raw amino-acid sequence, 373 residues long: Potential protein lysine methyltransferase SET6 (373 aa).

The 327-residue stretch at 12–338 (PFFQVRQTKW…KDEQICIDYS (327 aa)) folds into the SET domain.

The protein belongs to the class V-like SAM-binding methyltransferase superfamily.

Functionally, involved in resistance to compounds that target ergosterol biosynthesis, including fenpropimorph, dyclonine, and alverine citrate. Since a deletion in the absence of these compounds does not have an effect on growth, is more likely to be involved in compound availability. The sequence is that of Potential protein lysine methyltransferase SET6 (SET6) from Saccharomyces cerevisiae (strain ATCC 204508 / S288c) (Baker's yeast).